A 904-amino-acid chain; its full sequence is MCFLRRPGAPASWIWWRMLRQVLRRGLQSFCHRLGLCVSRHPVFFLTVPAVLTITFGLSALNRFQTEGDLERLVAPSHSLAKIERSLASSLFPLDQSKSQLYSDLHTPGRYGRVILLSSPGDNILLQAEGILQTHRAVMEMKVNHKGYNYTFSHLCVLRNQDKKCVLDDIISVLEDLRQAAVSNKTTARVQVRYPNTKLKDGRNSFIGHQLGGVVEVPNSKDQRVKSARAIQITYYLQTYGSATQDLIGEKWENEFCKLMRKLQEEHQDLQLYSLASFSLWRDFHKTSILTRSKVLVSLVLILTTATLSSSMKDCLRSKPFLGLLGVLTVCISIATAAGIFFITDGKYNSTLLGIPFFAMGHGTKGVFELLSGWRRTKENLPFKDRVADAYSDVMVTYTMTSSLYFITFGMGASPFTNIEAVKIFCQNMCVSILLNYFYIFSFFGSCLVFAGQLEQNRYHSIFCCKIPSAEYLDRKPVWFQTVMSDGHQQTSHHETNPYQHHFIQHFLREHYNEWITNIYVKPFVVILYLIYASFSFMGCLQISDGASIINLLASDSPSVSYAMVQQKYFSNYSPVIGFYVYEPLEYWNSSVQEDLQRLCSGFTAVSWVEQYYQFLKTSNISANNKTDFISVLQSSFLKKPEFQHFRNDIIFSRAGDENNIIASRLYLVARTSRDKQKEVIEVLDKLRPLSLSKSIRFIVFNPSFVFTDHYSLSVTVPVLIAGFGVLLVLILTFFLVIHPLGNFWLILSVTSIELGVLGLMTLWNVDMDCISILCLIYTLNFAIDHCAPLLYTFVLATEHTRTQCIKSSLQEHGTAILQNITSFLIGLLPLLFVPSNLTFTLFKCLLLTGGCTLLHCFVILPVFLTFFPPSKKHHKKKKRAKRKEREEIECIEIQENPDHVTTV.

The chain crosses the membrane as a helical span at residues 41-61 (HPVFFLTVPAVLTITFGLSAL). N-linked (GlcNAc...) asparagine glycosylation occurs at asparagine 149. One can recognise an SSD domain in the interval 291–450 (TRSKVLVSLV…FSFFGSCLVF (160 aa)). 6 consecutive transmembrane segments (helical) span residues 295 to 312 (VLVS…SSSM), 323 to 343 (GLLG…IFFI), 351 to 371 (TLLG…FELL), 394 to 414 (VMVT…MGAS), 431 to 451 (VSIL…LVFA), and 523 to 543 (PFVV…CLQI). A glycan (N-linked (GlcNAc...) asparagine) is linked at asparagine 625. 3 helical membrane-spanning segments follow: residues 718-738 (PVLI…FLVI), 744-764 (FWLI…MTLW), and 771-791 (ISIL…APLL). A glycan (N-linked (GlcNAc...) asparagine) is linked at asparagine 820. 2 helical membrane passes run 823–843 (SFLI…FTLF) and 845–865 (CLLL…PVFL).

Belongs to the patched family.

Its subcellular location is the membrane. Functionally, could act as a repressor of canonical hedgehog signaling by antagonizing the effects of SMO, as suggested by down-regulation of hedgehog target genes, including GLI1, PTCH1, and PTCH2 in PTCHD4-expressing cells. The sequence is that of Patched domain-containing protein 4 (Ptchd4) from Mus musculus (Mouse).